A 254-amino-acid polypeptide reads, in one-letter code: Pimeloyl-[acyl-carrier protein] methyl ester esterase (254 aa).

Residues L16–P242 enclose the AB hydrolase-1 domain. Residues W22, S82 to L83, and F143 to Q147 contribute to the substrate site. The active-site Nucleophile is the S82. Active-site residues include D207 and H235. H235 contributes to the substrate binding site.

The protein belongs to the AB hydrolase superfamily. Carboxylesterase BioH family. In terms of assembly, monomer.

Its subcellular location is the cytoplasm. The enzyme catalyses 6-carboxyhexanoyl-[ACP] methyl ester + H2O = 6-carboxyhexanoyl-[ACP] + methanol + H(+). It functions in the pathway cofactor biosynthesis; biotin biosynthesis. In terms of biological role, the physiological role of BioH is to remove the methyl group introduced by BioC when the pimeloyl moiety is complete. It allows to synthesize pimeloyl-ACP via the fatty acid synthetic pathway through the hydrolysis of the ester bonds of pimeloyl-ACP esters. The protein is Pimeloyl-[acyl-carrier protein] methyl ester esterase of Photobacterium profundum (strain SS9).